A 64-amino-acid polypeptide reads, in one-letter code: Prokaryotic ubiquitin-like protein Pup (64 aa).

Basic and acidic residues predominate over residues 1-11 (MAQEQTKRTGG). The interval 1-37 (MAQEQTKRTGGGDEDDTPGADGAAGQERREKLAEDTD) is disordered. The tract at residues 21–58 (DGAAGQERREKLAEDTDDLLDEIDDVLEENAEDFVRAY) is ARC ATPase binding. Positions 24–52 (AGQERREKLAEDTDDLLDEIDDVLEENAE) form a coiled coil. At Gln64 the chain carries Deamidated glutamine. Gln64 is covalently cross-linked (Isoglutamyl lysine isopeptide (Gln-Lys) (interchain with K-? in acceptor proteins)).

The protein belongs to the prokaryotic ubiquitin-like protein family. Strongly interacts with the proteasome-associated ATPase ARC through a hydrophobic interface; the interacting region of Pup lies in its C-terminal half. There is one Pup binding site per ARC hexamer ring. In terms of processing, is modified by deamidation of its C-terminal glutamine to glutamate by the deamidase Dop, a prerequisite to the subsequent pupylation process.

The protein operates within protein degradation; proteasomal Pup-dependent pathway. In terms of biological role, protein modifier that is covalently attached to lysine residues of substrate proteins, thereby targeting them for proteasomal degradation. The tagging system is termed pupylation. This chain is Prokaryotic ubiquitin-like protein Pup, found in Rhodococcus jostii (strain RHA1).